The sequence spans 2256 residues: Death-inducer obliterator 1 (2256 aa).

At Met1 the chain carries N-acetylmethionine. A compositionally biased stretch (basic and acidic residues) spans 1–25 (MDDKGHLSNEEAPKAIKPTSKEFRK). The tract at residues 1–256 (MDDKGHLSNE…NPREAGKPKP (256 aa)) is disordered. Composition is skewed to polar residues over residues 48–59 (SEQQPQQHNLSL) and 96–119 (EPTS…SSEI). 2 positions are modified to phosphoserine: Ser58 and Ser112. Positions 128-142 (LGKEHPASSEKAKGG) are enriched in basic and acidic residues. Over residues 143–153 (EEEEDTSDSDS) the composition is skewed to acidic residues. Thr148 carries the phosphothreonine modification. 2 positions are modified to phosphoserine: Ser149 and Ser151. Short sequence motifs (nuclear localization signal) lie at residues 162-170 (QNRLRRKRE) and 182-190 (QNRLRKKRR). Residues 169-178 (REQEPVERSL) show a composition bias toward basic and acidic residues. 2 stretches are compositionally biased toward basic and acidic residues: residues 206–216 (EQDRPLCKQEP) and 246–256 (ENPREAGKPKP). The PHD-type zinc finger occupies 265–319 (ALYCICRQPHNNRFMICCDRCEEWFHGDCVGISEARGRLLERNGEDYICPNCTIL). Disordered stretches follow at residues 481–535 (LASR…DDRR), 598–624 (RPWP…ASKK), 641–668 (ANVP…SQIR), 778–822 (SRTK…PEKS), 856–970 (QVPS…TALS), 1011–1039 (AKPS…PPEG), and 1197–1218 (PSSA…QEEL). Residues 495–506 (ESSTPSWASDHN) show a composition bias toward polar residues. Ser522 is subject to Phosphoserine. Positions 667–787 (IRQNIRRSLK…SRTKLLNESK (121 aa)) constitute a TFIIS central domain. Over residues 778–788 (SRTKLLNESKK) the composition is skewed to basic and acidic residues. The span at 797-812 (PDMEDSPPVSDSEEQQ) shows a compositional bias: acidic residues. Phosphoserine is present on residues Ser802 and Ser806. Composition is skewed to basic and acidic residues over residues 875 to 886 (SKKEDFKPRHDS) and 921 to 935 (QERK…DSHP). Lys876 participates in a covalent cross-link: Glycyl lysine isopeptide (Lys-Gly) (interchain with G-Cter in SUMO2). A Phosphoserine modification is found at Ser886. Residues 937-962 (PSSLGGLSPSSASGGSGVVTTVTMSG) are compositionally biased toward low complexity. A phosphoserine mark is found at Ser1016, Ser1027, and Ser1035. The segment covering 1202–1215 (ELDKTDEKRTRLQQ) has biased composition (basic and acidic residues). The residue at position 1239 (Tyr1239) is a Phosphotyrosine. The disordered stretch occupies residues 1245–1288 (DTAATSTTPPGSPPPPPPLPEPPVLKILSSLKPGSTSTVTAPTT). Thr1252 carries the phosphothreonine modification. Residues 1254 to 1267 (PGSPPPPPPLPEPP) show a composition bias toward pro residues. At Ser1256 the chain carries Phosphoserine. Positions 1279 to 1288 (STSTVTAPTT) are enriched in low complexity. At Ser1307 the chain carries Phosphoserine. Disordered stretches follow at residues 1320–1347 (KKSF…KGED), 1362–1421 (FGQF…VAYD), 1509–1609 (SDAL…EAKE), and 1630–2256 (QKCE…AAQA). A compositionally biased stretch (acidic residues) spans 1371-1387 (LEEEEEDDRPYDPEEEY). A Phosphoserine modification is found at Ser1514. The span at 1526–1546 (LFSQEQQAPDPSQGAPNTNHN) shows a compositional bias: polar residues. The span at 1547–1557 (LDSRQSRDPRQ) shows a compositional bias: basic and acidic residues. Residues 1649 to 1666 (PTAGDGAARPAPPRRVLL) show a composition bias toward low complexity. Residues 1667 to 1679 (PTPPSTTFPPSFP) are compositionally biased toward pro residues. A compositionally biased stretch (polar residues) spans 1699 to 1712 (TFMSQETSLGSSQY). Ser1726 is subject to Phosphoserine. A compositionally biased stretch (pro residues) spans 1783-1792 (FPGPRGPVPP). Residue Arg1848 is modified to Omega-N-methylarginine. Positions 1855-1869 (FEDRKDPHGEKREFQ) are enriched in basic and acidic residues. Residues Arg1904, Arg1905, Arg1988, Arg1993, Arg2004, Arg2019, and Arg2035 each carry the asymmetric dimethylarginine modification. Basic and acidic residues-rich tracts occupy residues 2081 to 2113 (EFRE…KPLD) and 2123 to 2246 (RQGR…EART).

Interacts specifically (via PHD-type zinc finger) with histone H3 that is trimethylated at 'Lys-4' (H3K4me3), histone phosphorylation at 'Thr-3' or 'Thr-6' disrupts this binding and promotes translocation of DIDO1 from chromatin to the mitotic spindle during mitosis. As to expression, ubiquitous. Expressed at intermediate levels.

It is found in the cytoplasm. The protein resides in the nucleus. It localises to the cytoskeleton. Its subcellular location is the spindle. Required for early embryonic stem cell development. Putative transcription factor, weakly pro-apoptotic when overexpressed. The sequence is that of Death-inducer obliterator 1 (Dido1) from Mus musculus (Mouse).